The sequence spans 1461 residues: Potassium channel K2 (1461 aa).

6 consecutive transmembrane segments (helical) span residues 44 to 64 (IIEGLLCIITGVILKLSLIYI), 142 to 162 (FNYYFCNIRDMCYTIIWYISL), 183 to 203 (IYNMLLILLSTSYIDLVMVII), 218 to 238 (LIDIFFSAPCTYLFSKFIFVF), 242 to 262 (IDIYFMMGFLRNIKIFLNVSY), and 281 to 301 (IVLGVLLLCNAFASTIYTIQA). The segment at residues 322-340 (YFYFSIISISTVGYGDIFP) is an intramembrane region (pore-forming). A helical membrane pass occupies residues 349–369 (CIIFIFWTFIWVPIQFNDLII). The tract at residues 771-794 (KRDDFDNNNNNNNNNIVKSRKKGR) is disordered.

As to quaternary structure, may form oligomers or interact with other proteins.

It is found in the membrane. In terms of biological role, contributes to transmembrane potassium transport. This Plasmodium falciparum (isolate 3D7) protein is Potassium channel K2.